The primary structure comprises 862 residues: DNA topoisomerase 3-beta-1 (862 aa).

Residues 3–153 (TVLMVAEKPS…EKTVFRARFS (151 aa)) form the Toprim domain. The 423-residue stretch at 171 to 593 (DHNEALSVDA…HTLDVFKRKF (423 aa)) folds into the Topo IA-type catalytic domain. Tyr336 functions as the O-(5'-phospho-DNA)-tyrosine intermediate in the catalytic mechanism. Residues 821-851 (PMHRGGPGRRQGRGRGRARRPPGKPNPRRPK) are compositionally biased toward basic residues. A disordered region spans residues 821–854 (PMHRGGPGRRQGRGRGRARRPPGKPNPRRPKDKM).

Belongs to the type IA topoisomerase family. In terms of tissue distribution, isoform 1 is found in testis, heart and skeletal muscle. A 4 kb transcript which probably represents isoform 2 is found in thymus, kidney and pancreas.

The catalysed reaction is ATP-independent breakage of single-stranded DNA, followed by passage and rejoining.. Functionally, releases the supercoiling and torsional tension of DNA introduced during the DNA replication and transcription by transiently cleaving and rejoining one strand of the DNA duplex. Introduces a single-strand break via transesterification at a target site in duplex DNA. The scissile phosphodiester is attacked by the catalytic tyrosine of the enzyme, resulting in the formation of a DNA-(5'-phosphotyrosyl)-enzyme intermediate and the expulsion of a 3'-OH DNA strand. The free DNA strand than undergoes passage around the unbroken strand thus removing DNA supercoils. Finally, in the religation step, the DNA 3'-OH attacks the covalent intermediate to expel the active-site tyrosine and restore the DNA phosphodiester backbone. Possesses negatively supercoiled DNA relaxing activity. The polypeptide is DNA topoisomerase 3-beta-1 (TOP3B) (Homo sapiens (Human)).